The chain runs to 591 residues: Reduced folate transporter (591 aa).

Methionine 1 carries the N-acetylmethionine modification. Over 1–29 the chain is Cytoplasmic; it reads MVPSSPAVEKQVPVEPGPDPELRSWRHLV. Serine 5 is subject to Phosphoserine. A helical membrane pass occupies residues 30–50; that stretch reads CYLCFYGFMAQIRPGESFITP. Isoleucine 48 and threonine 49 together coordinate folate. Topologically, residues 51–64 are extracellular; the sequence is YLLGPDKNFTREQV. N-linked (GlcNAc...) asparagine glycosylation occurs at asparagine 58. The helical transmembrane segment at 65 to 87 threads the bilayer; it reads TNEITPVLSYSYLAVLVPVFLLT. Topologically, residues 88–91 are cytoplasmic; it reads DYLR. A helical transmembrane segment spans residues 92 to 112; that stretch reads YTPVLLLQGLSFVSVWLLLLL. Over 113 to 116 the chain is Extracellular; it reads GHSV. Residues 117-139 form a helical membrane-spanning segment; sequence AHMQLMELFYSVTMAARIAYSSY. Folate contacts are provided by glutamate 123 and arginine 133. 2',3'-cGAMP contacts are provided by arginine 133, isoleucine 134, serine 137, tyrosine 149, and arginine 157. At 140–153 the chain is on the cytoplasmic side; the sequence is IFSLVRPARYQRVA. Residues 154–178 traverse the membrane as a helical segment; sequence GYSRAAVLLGVFTSSVLGQLLVTVG. A folate-binding site is contributed by valine 164. Topologically, residues 179 to 183 are extracellular; sequence RVSFS. A helical membrane pass occupies residues 184-202; the sequence is TLNYISLAFLTFSVVLALF. At 203–266 the chain is on the cytoplasmic side; it reads LKRPKRSLFF…ELGDSLRRPQ (64 aa). Residue serine 225 is modified to Phosphoserine. The helical transmembrane segment at 267–292 threads the bilayer; the sequence is LRLWSLWWVFNSAGYYLVVYYVHILW. Residues tyrosine 281, tyrosine 282, and tyrosine 286 each contribute to the folate site. Tyrosine 282 contacts 2',3'-cGAMP. Residues 293–304 lie on the Extracellular side of the membrane; sequence NEVDPTTNSARV. Residues 305–327 form a helical membrane-spanning segment; the sequence is YNGAADAASTLLGAITSFAAGFV. Serine 321 contributes to the 2',3'-cGAMP binding site. At 328–333 the chain is on the cytoplasmic side; that stretch reads KIRWAR. A helical transmembrane segment spans residues 334-354; the sequence is WSKLLIAGVTATQAGLVFLLA. The Extracellular segment spans residues 355-360; sequence HTRHPS. A helical transmembrane segment spans residues 361–384; it reads SIWLCYAAFVLFRGSYQFLVPIAT. Folate contacts are provided by arginine 373 and glutamine 377. Glutamine 377, proline 381, threonine 384, lysine 393, cysteine 396, and phenylalanine 400 together coordinate 2',3'-cGAMP. Topologically, residues 385 to 398 are cytoplasmic; sequence FQIASSLSKELCAL. Residues 399–422 form a helical membrane-spanning segment; sequence VFGVNTFFATIVKTIITFIVSDVR. The tract at residues 407–419 is required for substrate-binding; it reads ATIVKTIITFIVS. Residues 423–430 are Extracellular-facing; it reads GLGLPVRK. Residues 431–455 traverse the membrane as a helical segment; that stretch reads QFQLYSVYFLILSIIYFLGAMLDGL. Topologically, residues 456–591 are cytoplasmic; sequence RHCQRGHHPR…PSDGVQNVNQ (136 aa). Serine 474, serine 485, serine 499, and serine 503 each carry phosphoserine.

Belongs to the reduced folate carrier (RFC) transporter (TC 2.A.48) family. As to expression, placenta, liver, and to a much smaller extent, in lung.

The protein resides in the cell membrane. Its subcellular location is the apical cell membrane. It is found in the basolateral cell membrane. It carries out the reaction 5-amino-1-(5-phospho-beta-D-ribosyl)imidazole-4-carboxamide(in) + (6S)-5-methyl-5,6,7,8-tetrahydrofolate(out) = 5-amino-1-(5-phospho-beta-D-ribosyl)imidazole-4-carboxamide(out) + (6S)-5-methyl-5,6,7,8-tetrahydrofolate(in). It catalyses the reaction 2',3'-cGAMP(out) + 5-amino-1-(5-phospho-beta-D-ribosyl)imidazole-4-carboxamide(in) = 2',3'-cGAMP(in) + 5-amino-1-(5-phospho-beta-D-ribosyl)imidazole-4-carboxamide(out). The enzyme catalyses 3',3'-cGAMP(out) + 5-amino-1-(5-phospho-beta-D-ribosyl)imidazole-4-carboxamide(in) = 3',3'-cGAMP(in) + 5-amino-1-(5-phospho-beta-D-ribosyl)imidazole-4-carboxamide(out). In terms of biological role, antiporter that mediates the import of reduced folates or a subset of cyclic dinucleotides, driven by the export of organic anions. Acts as an importer of immunoreactive cyclic dinucleotides, such as cyclic GMP-AMP (2'-3'-cGAMP), an immune messenger produced in response to DNA virus in the cytosol, and its linkage isomer 3'-3'-cGAMP, thus playing a role in triggering larger immune responses. Mechanistically, acts as a secondary active transporter, which exports intracellular organic anions down their concentration gradients to facilitate the uptake of its substrates. Has high affinity for N5-methyltetrahydrofolate, the predominant circulating form of folate. Also mediates the import of antifolate drug methotrexate. 5-amino-4-imidazolecarboxamide riboside (AICAR), when phosphorylated to AICAR monophosphate, can serve as an organic anion for antiporter activity. This chain is Reduced folate transporter, found in Homo sapiens (Human).